Here is a 1331-residue protein sequence, read N- to C-terminus: ABC multidrug transporter MDR2 (1331 aa).

Basic and acidic residues-rich tracts occupy residues 1-20 (MVEV…KQEN) and 31-41 (SDKEKVAKKGN). Positions 1 to 51 (MVEVSEKPNTQDDGVSKQENRNPASSSSSTSDKEKVAKKGNSDATKSSTPE) are disordered. 4 consecutive transmembrane segments (helical) span residues 93-113 (MIFL…LPLF), 147-167 (YFVY…VGFI), 219-239 (KVGL…IGYV), and 242-262 (WKLA…MGGI). Residues 97–387 (AIVSLASIAA…VAPNTQAFAS (291 aa)) form the ABC transmembrane type-1 1 domain. Asn293 carries an N-linked (GlcNAc...) asparagine glycan. Helical transmembrane passes span 325-345 (LGIM…LGFW) and 358-378 (LSAI…IGNV). The ABC transporter 1 domain occupies 422 to 667 (IEFRGIKHIY…KGTYLQLVEA (246 aa)). 457-464 (GPSGSGKS) contributes to the ATP binding site. N-linked (GlcNAc...) asparagine glycosylation is found at Asn529 and Asn737. Transmembrane regions (helical) follow at residues 762 to 782 (LCGF…SVFF) and 810 to 830 (FLML…IFAI). The ABC transmembrane type-1 2 domain maps to 764–1051 (GFFFAVLSGA…VFSFSPDMGK (288 aa)). N-linked (GlcNAc...) asparagine glycosylation occurs at Asn860. The next 4 helical transmembrane spans lie at 884–904 (LGTI…ALAF), 910–930 (LVCI…FWIL), 995–1015 (ASQS…GGLL), and 1025–1045 (FFLC…VFSF). Residues 1086-1324 (IEFRDVHFRY…KGRYYELVHM (239 aa)) enclose the ABC transporter 2 domain. A glycan (N-linked (GlcNAc...) asparagine) is linked at Asn1108. An ATP-binding site is contributed by 1121-1128 (GPSGCGKS).

The protein belongs to the ABC transporter superfamily. ABCB family. Multidrug resistance exporter (TC 3.A.1.201) subfamily.

The protein resides in the cell membrane. It catalyses the reaction itraconazole(in) + ATP + H2O = itraconazole(out) + ADP + phosphate + H(+). Its function is as follows. Pleiotropic ABC efflux transporter that may be involved in the modulation susceptibility to a wide range of unrelated cytotoxic compounds. This Trichophyton equinum (strain ATCC MYA-4606 / CBS 127.97) (Horse ringworm fungus) protein is ABC multidrug transporter MDR2.